Consider the following 217-residue polypeptide: Ras-related protein RABA2c (217 aa).

Residues 19–27, 38–44, 67–71, 125–128, and 155–157 each bind GTP; these read GDSGVGKSN, CLESKST, DTAGQ, NKSD, and SAL. The Effector region signature appears at 41–49; sequence SKSTIGVEF. Residues 195-217 are disordered; that stretch reads PGQGTTINVDDTSGGAKRACCSS. 2 S-geranylgeranyl cysteine lipidation sites follow: Cys214 and Cys215.

Belongs to the small GTPase superfamily. Rab family. In terms of tissue distribution, expressed in root tips.

The protein localises to the endosome membrane. The protein resides in the golgi apparatus. It localises to the trans-Golgi network membrane. In terms of biological role, intracellular vesicle trafficking and protein transport. This is Ras-related protein RABA2c (RABA2C) from Arabidopsis thaliana (Mouse-ear cress).